Here is a 1210-residue protein sequence, read N- to C-terminus: Epidermal growth factor receptor (1210 aa).

The signal sequence occupies residues 1-24; the sequence is MRPSGTAGAALLALLAALCPASRA. At 25-645 the chain is on the extracellular side; the sequence is LEEKKVCQGT…CARNGPKIPS (621 aa). Cys31 and Cys58 form a disulfide bridge. One copy of the Approximate repeat lies at 75 to 300; it reads DLSFLKTIQE…CVKKCPRNYV (226 aa). 3 N-linked (GlcNAc...) asparagine glycosylation sites follow: Asn128, Asn175, and Asn196. 13 disulfides stabilise this stretch: Cys157–Cys187, Cys190–Cys199, Cys194–Cys207, Cys215–Cys223, Cys219–Cys231, Cys232–Cys240, Cys236–Cys248, Cys251–Cys260, Cys264–Cys291, Cys295–Cys307, Cys311–Cys326, Cys329–Cys333, and Cys337–Cys362. The residue at position 229 (Ser229) is a Phosphoserine. Residues Asn352, Asn361, Asn413, and Asn444 are each glycosylated (N-linked (GlcNAc...) asparagine). The stretch at 390–600 is one Approximate repeat; sequence QELDILKTVK…CVKTCPAGVM (211 aa). Disulfide bonds link Cys470-Cys499, Cys506-Cys515, Cys510-Cys523, Cys526-Cys535, Cys539-Cys555, Cys558-Cys571, Cys562-Cys579, Cys582-Cys591, Cys595-Cys617, Cys620-Cys628, and Cys624-Cys636. Residue Asn528 is glycosylated (N-linked (GlcNAc...) asparagine). An N-linked (GlcNAc...) asparagine glycan is attached at Asn568. A glycan (N-linked (GlcNAc...) asparagine) is linked at Asn603. A helical transmembrane segment spans residues 646–668; that stretch reads IATGMVGALLLLLVVALGIGLFM. Topologically, residues 669–1210 are cytoplasmic; it reads RRRHIVRKRT…APQSSEFIGA (542 aa). Thr678 bears the Phosphothreonine; by PKC and PKD/PRKD1 mark. Residues 688 to 704 form an important for dimerization, phosphorylation and activation region; the sequence is LVEPLTPSGEAPNQALL. Thr693 carries the post-translational modification Phosphothreonine; by PKD/PRKD1. Ser695 is modified (phosphoserine). The region spanning 712–979 is the Protein kinase domain; it reads FKKIKVLGSG…KMARDPQRYL (268 aa). Lys716 participates in a covalent cross-link: Glycyl lysine isopeptide (Lys-Gly) (interchain with G-Cter in ubiquitin). ATP is bound at residue 718–726; it reads LGSGAFGTV. A Glycyl lysine isopeptide (Lys-Gly) (interchain with G-Cter in ubiquitin) cross-link involves residue Lys737. Residue Lys745 coordinates ATP. N6-(2-hydroxyisobutyryl)lysine is present on Lys745. Residues Lys754 and Lys757 each participate in a glycyl lysine isopeptide (Lys-Gly) (interchain with G-Cter in ubiquitin) cross-link. 790-791 contacts ATP; it reads TQ. Asp837 functions as the Proton acceptor in the catalytic mechanism. Asp855 contacts ATP. Lys867 participates in a covalent cross-link: Glycyl lysine isopeptide (Lys-Gly) (interchain with G-Cter in ubiquitin). Tyr869 is modified (phosphotyrosine). Glycyl lysine isopeptide (Lys-Gly) (interchain with G-Cter in ubiquitin) cross-links involve residues Lys929, Lys960, and Lys970. Phosphoserine is present on residues Ser991 and Ser995. Phosphotyrosine; by autocatalysis occurs at positions 998 and 1016. A phosphoserine mark is found at Ser1026 and Ser1039. At Thr1041 the chain carries Phosphothreonine. Ser1042 carries the phosphoserine modification. The S-palmitoyl cysteine moiety is linked to residue Cys1049. Ser1064 bears the Phosphoserine mark. A Phosphotyrosine modification is found at Tyr1069. 3 positions are modified to phosphoserine: Ser1070, Ser1071, and Ser1081. Tyr1092 and Tyr1110 each carry phosphotyrosine; by autocatalysis. Residues 1097-1137 form a disordered region; the sequence is VPKRPAGSVQNPVYHNQPLNPAPSRDPHYQDPHSTAVGNPE. Composition is skewed to polar residues over residues 1104-1115 and 1128-1137; these read SVQNPVYHNQPL and PHSTAVGNPE. Cys1146 carries the S-palmitoyl cysteine lipid modification. A Phosphoserine modification is found at Ser1166. Residues Tyr1172 and Tyr1197 each carry the phosphotyrosine; by autocatalysis modification. Position 1199 is an omega-N-methylarginine (Arg1199).

It belongs to the protein kinase superfamily. Tyr protein kinase family. EGF receptor subfamily. In terms of assembly, binding of the ligand triggers homo- and/or heterodimerization of the receptor triggering its autophosphorylation. Heterodimer with ERBB2. Forms a complex with CCDC88A/GIV (via SH2-like regions) and GNAI3 which leads to enhanced EGFR signaling and triggering of cell migration; binding to CCDC88A requires autophosphorylation of the EGFR C-terminal region, and ligand stimulation is required for recruitment of GNAI3 to the complex. Interacts with ERRFI1; inhibits dimerization of the kinase domain and autophosphorylation. Part of a complex with ERBB2 and either PIK3C2A or PIK3C2B. Interacts with GRB2; an adapter protein coupling the receptor to downstream signaling pathways. Interacts with GAB2; involved in signaling downstream of EGFR. Interacts with STAT3; mediates EGFR downstream signaling in cell proliferation. Interacts with RIPK1; involved in NF-kappa-B activation. Interacts (autophosphorylated) with CBL, CBLB and CBLC; involved in EGFR ubiquitination and regulation; interaction with CBL is reduced in the presence of tensin TNS4. Interacts with SOCS5; regulates EGFR degradation through ELOC- and ELOB-mediated ubiquitination and proteasomal degradation. Interacts with PRMT5; methylates EGFR and enhances interaction with PTPN6. Interacts (phosphorylated) with PTPN6; inhibits EGFR-dependent activation of MAPK/ERK. Interacts with COPG1; essential for regulation of EGF-dependent nuclear transport of EGFR by retrograde trafficking from the Golgi to the ER. Interacts with TNK2; this interaction is dependent on EGF stimulation and kinase activity of EGFR. Interacts with PCNA; positively regulates PCNA. Interacts with PELP1. Interacts with MUC1. Interacts with AP2M1. Interacts with FER. May interact with EPS8; mediates EPS8 phosphorylation. Interacts (via SH2 domains) with GRB2, NCK1 and NCK2. Interacts with ATXN2. Interacts with GAREM1. Interacts (ubiquitinated) with ANKRD13A/B/D; the interaction is direct and may regulate EGFR internalization after EGF stimulation. Interacts with GPER1; the interaction occurs in an estrogen-dependent manner. Interacts (via C-terminal cytoplasmic kinase domain) with ZPR1 (via zinc fingers). Interacts with RNF115 and RNF126. Interacts with GPRC5A (via its transmembrane domain). Interacts with FAM83B; positively regulates EGFR inducing its autophosphorylation in absence of stimulation by EGF. Interacts with LAPTM4B; positively correlates with EGFR activation. Interacts with STX19. Interacts with CD44. Interacts with PGRMC1; the interaction requires PGRMC1 homodimerization. Interacts with PIKFYVE. Interacts with NEU3. Interacts with TRAF4. Interacts with the ant venom OMEGA-myrmeciitoxin(02)-Mg1a. Interacts with CD82; this interaction facilitates ligand-induced endocytosis of the receptor and its subsequent desensitization. Post-translationally, phosphorylated on Tyr residues in response to EGF. Phosphorylation at Ser-695 is partial and occurs only if Thr-693 is phosphorylated. Phosphorylation at Thr-678 and Thr-693 by PRKD1 inhibits EGF-induced MAPK8/JNK1 activation. Dephosphorylation by PTPRJ prevents endocytosis and stabilizes the receptor at the plasma membrane. Autophosphorylation at Tyr-1197 is stimulated by methylation at Arg-1199 and enhances interaction with PTPN6. Autophosphorylation at Tyr-1092 and/or Tyr-1110 recruits STAT3. Dephosphorylated by PTPN1 and PTPN2. In terms of processing, monoubiquitinated and polyubiquitinated upon EGF stimulation; which does not affect tyrosine kinase activity or signaling capacity but may play a role in lysosomal targeting. Polyubiquitin linkage is mainly through 'Lys-63', but linkage through 'Lys-48', 'Lys-11' and 'Lys-29' also occurs. Deubiquitination by OTUD7B prevents degradation. Ubiquitinated by RNF115 and RNF126. Ubiquitinated by ZNRF1 or CBL at different lysines in response to EGF stimulation; leading to recruitment of the ESCRT machinery and subsequent degradation in the lysosomes. Deubiquitinated by UCHL1 leading to the inhibition of its degradation. Palmitoylated on Cys residues by ZDHHC20. Palmitoylation inhibits internalization after ligand binding, and increases the persistence of tyrosine-phosphorylated EGFR at the cell membrane. Palmitoylation increases the amplitude and duration of EGFR signaling. Post-translationally, methylated. Methylation at Arg-1199 by PRMT5 stimulates phosphorylation at Tyr-1197. In terms of tissue distribution, hypothalamus.

It localises to the cell membrane. It is found in the endoplasmic reticulum membrane. Its subcellular location is the golgi apparatus membrane. The protein resides in the nucleus membrane. The protein localises to the endosome. It localises to the endosome membrane. It is found in the nucleus. It catalyses the reaction L-tyrosyl-[protein] + ATP = O-phospho-L-tyrosyl-[protein] + ADP + H(+). Endocytosis and inhibition of the activated EGFR by phosphatases like PTPRJ and PTPRK constitute immediate regulatory mechanisms. Upon EGF-binding phosphorylates EPS15 that regulates EGFR endocytosis and activity. Moreover, inducible feedback inhibitors including LRIG1, SOCS4, SOCS5 and ERRFI1 constitute alternative regulatory mechanisms for the EGFR signaling. Its function is as follows. Receptor tyrosine kinase binding ligands of the EGF family and activating several signaling cascades to convert extracellular cues into appropriate cellular responses. Known ligands include EGF, TGFA/TGF-alpha, AREG, epigen/EPGN, BTC/betacellulin, epiregulin/EREG and HBEGF/heparin-binding EGF. Ligand binding triggers receptor homo- and/or heterodimerization and autophosphorylation on key cytoplasmic residues. The phosphorylated receptor recruits adapter proteins like GRB2 which in turn activates complex downstream signaling cascades. Activates at least 4 major downstream signaling cascades including the RAS-RAF-MEK-ERK, PI3 kinase-AKT, PLCgamma-PKC and STATs modules. May also activate the NF-kappa-B signaling cascade. Also directly phosphorylates other proteins like RGS16, activating its GTPase activity and probably coupling the EGF receptor signaling to the G protein-coupled receptor signaling. Also phosphorylates MUC1 and increases its interaction with SRC and CTNNB1/beta-catenin. Positively regulates cell migration via interaction with CCDC88A/GIV which retains EGFR at the cell membrane following ligand stimulation, promoting EGFR signaling which triggers cell migration. Plays a role in enhancing learning and memory performance. Plays a role in mammalian pain signaling (long-lasting hypersensitivity). This chain is Epidermal growth factor receptor (EGFR), found in Macaca mulatta (Rhesus macaque).